A 209-amino-acid polypeptide reads, in one-letter code: MQHSSVTSPRAAIYQWFSQLLFQELTEAQLVTLGGRESRAWIASLSTIPGLASDVKRFERSLTRVLHREAREQELAADFASLFLLAPPVGVSPYAGHYPHTTPAQERRQMNALLVEQALAPRENEASDHIAIQLALMAEQISREASVATQYYFLQHHILCWAPLFMASCQQREAEGFYVLAVAMIVHFMHEDAQYLESLLMDNVYCRNH.

Belongs to the TorD/DmsD family. TorD subfamily.

It localises to the cytoplasm. Its function is as follows. Involved in the biogenesis of TorA. Acts on TorA before the insertion of the molybdenum cofactor and, as a result, probably favors a conformation of the apoenzyme that is competent for acquiring the cofactor. This Salmonella bongori (strain ATCC 43975 / DSM 13772 / NCTC 12419) protein is Chaperone protein TorD.